The sequence spans 185 residues: Ribosome maturation factor RimM (185 aa).

A PRC barrel domain is found at 96–171 (EDEFYHSDLL…VITIDPPEDV (76 aa)). Residues 165–185 (IDPPEDVGSKAEEEGGGAPDD) form a disordered region.

It belongs to the RimM family. Binds ribosomal protein uS19.

The protein resides in the cytoplasm. Its function is as follows. An accessory protein needed during the final step in the assembly of 30S ribosomal subunit, possibly for assembly of the head region. Essential for efficient processing of 16S rRNA. May be needed both before and after RbfA during the maturation of 16S rRNA. It has affinity for free ribosomal 30S subunits but not for 70S ribosomes. The sequence is that of Ribosome maturation factor RimM from Maricaulis maris (strain MCS10) (Caulobacter maris).